Reading from the N-terminus, the 205-residue chain is Octanoyltransferase (205 aa).

Residues 29–204 (AETPDEIWIV…HLLQQLDQKN (176 aa)) enclose the BPL/LPL catalytic domain. Substrate is bound by residues 68 to 75 (RGGQVTYH), 135 to 137 (ALG), and 148 to 150 (GVS). The active-site Acyl-thioester intermediate is C166.

This sequence belongs to the LipB family.

It localises to the cytoplasm. It catalyses the reaction octanoyl-[ACP] + L-lysyl-[protein] = N(6)-octanoyl-L-lysyl-[protein] + holo-[ACP] + H(+). The protein operates within protein modification; protein lipoylation via endogenous pathway; protein N(6)-(lipoyl)lysine from octanoyl-[acyl-carrier-protein]: step 1/2. Catalyzes the transfer of endogenously produced octanoic acid from octanoyl-acyl-carrier-protein onto the lipoyl domains of lipoate-dependent enzymes. Lipoyl-ACP can also act as a substrate although octanoyl-ACP is likely to be the physiological substrate. In Dechloromonas aromatica (strain RCB), this protein is Octanoyltransferase.